Here is a 421-residue protein sequence, read N- to C-terminus: Truncated surface protein (421 aa).

The N-terminal stretch at 1 to 31 (MRAKGTRKNYQHLWRWGTMLLGMLMICSAAE) is a signal peptide. C53 and C73 are disulfide-bonded. N-linked (GlcNAc...) asparagine; by host glycans are attached at residues N87, N97, N129, N135, N140, N151, N155, N183, N192, N229, N236, N257, N271, N284, N290, N296, N326, N333, N349, and N355. Intrachain disulfides connect C118–C200, C125–C191, C130–C152, C213–C242, and C223–C234. Residues 130-151 (CTDLTNATYANGSSEERGEIRN) are V1. Positions 152–191 (CSFNVTTIIRNKIQKEYALFYRLDIVPIDKDNTSYTLINC) are V2. The interval 291–324 (CTRPNNNTKKGIAIGPGRTLYAREKIIGDIRQAH) is V3. Residues C291 and C325 are joined by a disulfide bond. Residues 357–367 (SSGGDPEIVMH) are CD4-binding loop. C378 and C410 are disulfide-bonded. The V4 stretch occupies residues 378-410 (CKTTQLFNSTWLFNSTWNDTERSDNNETIIIPC). N-linked (GlcNAc...) asparagine; by host glycosylation is found at N385, N391, N395, and N403.

The protein resides in the virion membrane. The sequence is that of Truncated surface protein (env) from Human immunodeficiency virus type 1 group M subtype B (isolate NY5) (HIV-1).